Reading from the N-terminus, the 427-residue chain is Dihydroorotase (427 aa).

2 residues coordinate Zn(2+): His60 and His62. Residues 62 to 64 and Asn94 contribute to the substrate site; that span reads HLR. Residues Asp152, His179, and His232 each coordinate Zn(2+). Asn278 contributes to the substrate binding site. Zn(2+) is bound at residue Asp305. The active site involves Asp305. Substrate-binding positions include His309 and 323–324; that span reads FG.

Belongs to the metallo-dependent hydrolases superfamily. DHOase family. Class I DHOase subfamily. It depends on Zn(2+) as a cofactor.

It catalyses the reaction (S)-dihydroorotate + H2O = N-carbamoyl-L-aspartate + H(+). The protein operates within pyrimidine metabolism; UMP biosynthesis via de novo pathway; (S)-dihydroorotate from bicarbonate: step 3/3. Its function is as follows. Catalyzes the reversible cyclization of carbamoyl aspartate to dihydroorotate. This Geobacillus sp. (strain WCH70) protein is Dihydroorotase.